The following is a 1277-amino-acid chain: Membrane-associated guanylate kinase, WW and PDZ domain-containing protein 2 (1277 aa).

One can recognise a PDZ domain in the interval 17–101 (ESVIGRNPEG…PLRLKCVKQG (85 aa)). The Guanylate kinase-like domain occupies 109–283 (RHYLNLRFQK…APVYSQPEEL (175 aa)). Residues 205 to 308 (PGATPSAEGK…EDSDPLPDNW (104 aa)) are disordered. The segment covering 281 to 296 (EELKDQMDDTKSTKPE) has biased composition (basic and acidic residues). 2 consecutive WW domains span residues 302–335 (DPLP…DPRL) and 348–381 (NELP…NPVL). Residues 302 to 381 (DPLPDNWEMA…RRTQFENPVL (80 aa)) are interaction with DDN. Phosphotyrosine is present on tyrosine 362. The PDZ 1 domain occupies 426–510 (STTLKKSNMG…SVNLVLCRGY (85 aa)). Residues 556 to 575 (QSVPDITDRPPHSLHSMPAD) are disordered. In terms of domain architecture, PDZ 2 spans 605–683 (TLTIVKGAKG…ETSLIIHRGG (79 aa)). Serine 686 bears the Phosphoserine mark. Residues 778 to 860 (DVHLRRMESG…NGQVNLTVRR (83 aa)) form the PDZ 3 domain. Tyrosine 827 is subject to Phosphotyrosine. A disordered region spans residues 869–913 (CPENGRSPGSVSTHHSSPRSDYATYANSNHAAPSNNASPPEGFAS). 2 positions are modified to phosphoserine: serine 884 and serine 885. A compositionally biased stretch (low complexity) spans 894–908 (ANSNHAAPSNNASPP). In terms of domain architecture, PDZ 4 spans 920–1010 (DVIIHRKENE…SVTLRIIPQE (91 aa)). Over residues 1011–1042 (ELNNPTSAPSSEKQSPMAQQHSPLAQQHSPLA) the composition is skewed to polar residues. Residues 1011 to 1130 (ELNNPTSAPS…PDTRQYPLSD (120 aa)) form a disordered region. Over residues 1069-1085 (NSYRSEVKARQDVKPDI) the composition is skewed to basic and acidic residues. A PDZ 5 domain is found at 1141–1223 (TVDMEKGAKG…RVRLLLKRGT (83 aa)).

This sequence belongs to the MAGUK family. As to quaternary structure, interacts (via its WW domains) with DRPLA. Interacts with CTNNB1, ACVR2A, SMAD2 and SMAD3. Part of a complex consisting of MAGI2/ARIP1, ACVR2A, ACVR1B and SMAD3. May interact with HTR2A and IGSF9. Interacts with HTR4. Interacts (via guanylate kinase domain) with DLGAP1. Interacts (via PDZ domains) with GRIN2A, GRID2 and NLGN1. Interacts with CTNND2. Interacts with MAGUIN-1. Interacts (via its second PDZ domain) with PTEN (via unphosphorylated C-terminus); this interaction diminishes the degradation rate of PTEN. Found in a complex, at least composed of KIDINS220, MAGI2, NTRK1 and RAPGEF2; the complex is mainly formed at late endosomes in a NGF-dependent manner. Interacts with RAPGEF2; the interaction occurs before or after nerve growth factor (NGF) stimulation. Isoform 1 interacts (via PDZ domain) with KIDINS220 isoform 2 (via C-terminal domain). Interacts with DDN. Identified in a complex with ACTN4, CASK, IQGAP1, NPHS1, SPTAN1 and SPTBN1. Interacts with DLL1. Found in a complex with IGSF9B and NLGN2; the interaction with IGSF9B is mediated via the PDZ 5 and PDZ 6 domains, while the interaction with NLGN2 is mediated via the WW1, WW2 and PDZ2 domains. Interacts (via PDZ 6 domain) with USH1G (via SAM domain); the interaction is triggered by phosphorylation of USH1G by CK2 and negatively regulates MAGI2-mediated endocytosis. In terms of tissue distribution, expressed in the foot process layer of podocytes of the kidney glomeruli but not in tubules (at protein level). Expressed in the brain.

The protein localises to the cytoplasm. The protein resides in the late endosome. It is found in the synapse. Its subcellular location is the synaptosome. It localises to the cell membrane. The protein localises to the cytoskeleton. The protein resides in the microtubule organizing center. It is found in the centrosome. Its subcellular location is the cell projection. It localises to the cilium. The protein localises to the centriole. The protein resides in the photoreceptor inner segment. It is found in the photoreceptor outer segment. In terms of biological role, seems to act as scaffold molecule at synaptic junctions by assembling neurotransmitter receptors and cell adhesion proteins. Plays a role in nerve growth factor (NGF)-induced recruitment of RAPGEF2 to late endosomes and neurite outgrowth. May play a role in regulating activin-mediated signaling in neuronal cells. Enhances the ability of PTEN to suppress AKT1 activation. Plays a role in receptor-mediated clathrin-dependent endocytosis which is required for ciliogenesis. This is Membrane-associated guanylate kinase, WW and PDZ domain-containing protein 2 (Magi2) from Rattus norvegicus (Rat).